We begin with the raw amino-acid sequence, 156 residues long: Phospholipase A2 A2-hormotoxin-Apt1a (156 aa).

Positions 1–19 (MQLYTYFFTFSLVLILALA) are cleaved as a signal peptide. Positions 20-35 (DQENKSLDFTQEGGIA) are excised as a propeptide. Intrachain disulfides connect cysteine 62-cysteine 156, cysteine 64-cysteine 80, cysteine 79-cysteine 138, cysteine 86-cysteine 131, and cysteine 115-cysteine 129. Residues glycine 65 and glycine 67 each contribute to the Ca(2+) site. The active site involves histidine 83. Aspartate 84 provides a ligand contact to Ca(2+). Aspartate 132 is a catalytic residue.

It belongs to the phospholipase A2 family. It depends on Ca(2+) as a cofactor.

The protein localises to the secreted. The protein resides in the nematocyst. The enzyme catalyses a 1,2-diacyl-sn-glycero-3-phosphocholine + H2O = a 1-acyl-sn-glycero-3-phosphocholine + a fatty acid + H(+). Its function is as follows. Sea anemone phospholipase A2 (PLA2) that may have a role both in defense and in digestion, since its expression and enzymatic activity were found both in the acontia (defensive organs) and tentacles. PLA2 catalyzes the calcium-dependent hydrolysis of the 2-acyl groups in 3-sn-phosphoglycerides. This is Phospholipase A2 A2-hormotoxin-Apt1a from Adamsia palliata (Cloak anemone).